The chain runs to 134 residues: ATP synthase epsilon chain, chloroplastic (134 aa).

The protein belongs to the ATPase epsilon chain family. F-type ATPases have 2 components, CF(1) - the catalytic core - and CF(0) - the membrane proton channel. CF(1) has five subunits: alpha(3), beta(3), gamma(1), delta(1), epsilon(1). CF(0) has three main subunits: a, b and c.

Its subcellular location is the plastid. The protein resides in the chloroplast thylakoid membrane. Produces ATP from ADP in the presence of a proton gradient across the membrane. The protein is ATP synthase epsilon chain, chloroplastic of Spinacia oleracea (Spinach).